Here is a 689-residue protein sequence, read N- to C-terminus: Protein asunder (689 aa).

Positions 521-550 (NGARLKLSKAKDQYRLLYRELEQLIQLNAT) form a coiled coil. Disordered regions lie at residues 591-619 (SPERLEPISSVGASGSSNSNSLLKASKRR) and 669-689 (KDAVTTGASITPNVKEESVRS). Over residues 599–614 (SSVGASGSSNSNSLLK) the composition is skewed to low complexity. The Nuclear localization signal (NLS) motif lies at 613-619 (LKASKRR).

The protein belongs to the Integrator subunit 13 family. In terms of assembly, belongs to the multiprotein complex Integrator, at least composed of IntS1, IntS2, IntS3, IntS4, omd/IntS5, IntS6, defl/IntS7, IntS8, IntS9, IntS10, IntS11, IntS12, asun/IntS13, IntS14 and IntS15. The core complex associates with protein phosphatase 2A subunits mts/PP2A and Pp2A-29B, to form the Integrator-PP2A (INTAC) complex. Phosphorylated.

It localises to the nucleus. The protein localises to the cytoplasm. Its subcellular location is the perinuclear region. In terms of biological role, component of the integrator complex, a multiprotein complex that terminates RNA polymerase II (Pol II) transcription in the promoter-proximal region of genes. The integrator complex provides a quality checkpoint during transcription elongation by driving premature transcription termination of transcripts that are unfavorably configured for transcriptional elongation: the complex terminates transcription by (1) catalyzing dephosphorylation of the C-terminal domain (CTD) of Pol II subunit Polr2A/Rbp1 and Spt5, and (2) degrading the exiting nascent RNA transcript via endonuclease activity. The integrator complex is also involved in the 3'-end processing of the U7 snRNA, and also the spliceosomal snRNAs U1, U2, U4 and U5. This chain is Protein asunder (asun), found in Drosophila simulans (Fruit fly).